The chain runs to 159 residues: Transmembrane protein 88 (159 aa).

2 helical membrane-spanning segments follow: residues 43-63 (LLLLVLVLGTILLPAVTMLGF) and 88-108 (FTALLVTGFLLLVPLLVLALA). The disordered stretch occupies residues 137–159 (PQPRQIRASPGSQAVPTSGKVWV).

It belongs to the TMEM88 family. In terms of assembly, interacts (via C-terminus) with DVL1.

It is found in the cell membrane. Functionally, inhibits the Wnt/beta-catenin signaling pathway. Crucial for heart development and acts downstream of GATA factors in the pre-cardiac mesoderm to specify lineage commitment of cardiomyocyte development. The protein is Transmembrane protein 88 (TMEM88) of Homo sapiens (Human).